A 1012-amino-acid polypeptide reads, in one-letter code: MRRSTDPRNLLVRRGPLLVDGESAISELDPGFFPTGDAPKMSSTTRRRFNLIAFTPGPVTVISSLVYLALLIPLLLVHTIVPSAPKSNPKGVDLSEAWNDLQHLTSGFHPYNSHRNDEIHQWLLQRVGHILDASRKAHEDDAMGSVAPDVFVFDDQQSNLTFSGGGVGNKPITGVYFEGKNIIVYIRGLEDDKENWWDSPGGKPKGKGGVLVNAHYDSVSTGFGATDDGVGVVSVLQLIKFFTSPGNLPRKGLVLLLNNGEEDYLNGARAYSQHPLSKYTHTFLNLEGAGAGGRAALFRTTDIEVTRFYKSSPHPFGSVLAADGFKMGLIRSETDYAVFKGVLGLRGLDVAFIEPRARYHTDQDDVRHTSIDSVWHMLSAAIATTKGLVSYTGSEFDGRAPGKGMVNSGVGTHGVWFDLFGSSFAVFRLHTLFAISVTLLVVCPIVLFVIGIILSKMDKMYLFSIHETIPETKEKVSVRGLRGLFRYPIILVVSSGILIGLSYLLAKVNPFIVHSSSYAVWSMMLSSWIFMTWFLSCIADFFRPSALHRAYTFTWQLLVMWVLLVISTVYVNQHDIAAGYFIVFYFAGTFLATLISYLELFALPNKTRYAREQSQYPSRLGSNRSSRILSPSADELPTGGDNNGEIYDGEEEPTESSSLLGRQRRTTFANYTRTGRDLASSESGTYEDHSETGVFGEEQKWSASLPTWTWVLQFLFVGPVVIMFIGQLGLFLTSAMNQVGADGVGLLVVYIAIAVFSVLLLIPLSPFIHRFTYHVPTFLLLVFIATLIYNLAAFPFSAENRLKIFFVQELNLDTGRNQVSLTGVDPYVQDIIRAIPSASKENISCDSELDSGRRKCSWPGLAPEVVQDEPTDRWLSFNISKPSSQETKDTPVLHARLHVSGKNTRACRVNFERPIRDYSLPGSALDDRMPHTLPQGISEIRLWSRTWENVWTVDVQWDAEDMDELHGRVVCLWSDANQLGSIPALDELRLFAPPWVAISKLKDGLVEVSRGF.

The Cytoplasmic portion of the chain corresponds to 1-60 (MRRSTDPRNLLVRRGPLLVDGESAISELDPGFFPTGDAPKMSSTTRRRFNLIAFTPGPVT). Residues 61–81 (VISSLVYLALLIPLLLVHTIV) form a helical membrane-spanning segment. Residues 82–432 (PSAPKSNPKG…SFAVFRLHTL (351 aa)) are Vacuolar-facing. N-linked (GlcNAc...) asparagine glycosylation occurs at asparagine 159. Residues histidine 215 and aspartate 227 each contribute to the Zn(2+) site. The Proton acceptor role is filled by glutamate 261. Glutamate 262, glutamate 287, and histidine 360 together coordinate Zn(2+). A helical transmembrane segment spans residues 433–453 (FAISVTLLVVCPIVLFVIGII). Over 454–487 (LSKMDKMYLFSIHETIPETKEKVSVRGLRGLFRY) the chain is Cytoplasmic. The chain crosses the membrane as a helical span at residues 488–508 (PIILVVSSGILIGLSYLLAKV). At 509–518 (NPFIVHSSSY) the chain is on the vacuolar side. A helical membrane pass occupies residues 519–539 (AVWSMMLSSWIFMTWFLSCIA). Residues 540-550 (DFFRPSALHRA) lie on the Cytoplasmic side of the membrane. The chain crosses the membrane as a helical span at residues 551–571 (YTFTWQLLVMWVLLVISTVYV). Topologically, residues 572 to 575 (NQHD) are vacuolar. A helical membrane pass occupies residues 576-596 (IAAGYFIVFYFAGTFLATLIS). Over 597–710 (YLELFALPNK…WSASLPTWTW (114 aa)) the chain is Cytoplasmic. Over residues 614–629 (SQYPSRLGSNRSSRIL) the composition is skewed to polar residues. The segment at 614 to 660 (SQYPSRLGSNRSSRILSPSADELPTGGDNNGEIYDGEEEPTESSSLL) is disordered. The chain crosses the membrane as a helical span at residues 711–731 (VLQFLFVGPVVIMFIGQLGLF). At 732–743 (LTSAMNQVGADG) the chain is on the vacuolar side. Residues 744 to 764 (VGLLVVYIAIAVFSVLLLIPL) form a helical membrane-spanning segment. The Cytoplasmic portion of the chain corresponds to 765 to 777 (SPFIHRFTYHVPT). Residues 778–798 (FLLLVFIATLIYNLAAFPFSA) form a helical membrane-spanning segment. At 799-1012 (ENRLKIFFVQ…DGLVEVSRGF (214 aa)) the chain is on the vacuolar side. N-linked (GlcNAc...) asparagine glycans are attached at residues asparagine 842 and asparagine 878.

It belongs to the peptidase M28 family. It depends on Zn(2+) as a cofactor.

The protein resides in the vacuole membrane. In terms of biological role, may be involved in vacuolar sorting and osmoregulation. This is Vacuolar membrane protease from Coccidioides posadasii (strain C735) (Valley fever fungus).